A 308-amino-acid polypeptide reads, in one-letter code: MASLKDLRDRIASVKATQKITKAMQMVAAARLHRAQEAAQSARPYAKRMADILTSVAADVDGVDAPALMRGTGRDDVHLLVVCTAERGLCGAFNVQIARRAREQIKALLAAGKIVKIITVGKKGADILSRDYKSLMIDHIDLHAVKRIGFAEALVISQRIVDLFNEGAFDVCTLFYSEFVSVINQRPTAFGLIPMGAPKAAVEATDVVEQKETSKDSQSIVHEAIVYEYEPDAASLLEALVPRNLSVQIFRALLENVAGEMGAKMTAMDNASRNAGEMINKLTVAYNRQRQAQITTELIEIIAGAEAL.

This sequence belongs to the ATPase gamma chain family. In terms of assembly, F-type ATPases have 2 components, CF(1) - the catalytic core - and CF(0) - the membrane proton channel. CF(1) has five subunits: alpha(3), beta(3), gamma(1), delta(1), epsilon(1). CF(0) has three main subunits: a, b and c.

Its subcellular location is the cell inner membrane. Produces ATP from ADP in the presence of a proton gradient across the membrane. The gamma chain is believed to be important in regulating ATPase activity and the flow of protons through the CF(0) complex. The chain is ATP synthase gamma chain from Bartonella tribocorum (strain CIP 105476 / IBS 506).